Here is a 479-residue protein sequence, read N- to C-terminus: Probable polyamine transporter At3g19553 (479 aa).

The next 12 helical transmembrane spans lie at 22-42 (LTLL…PFGV), 53-73 (LLAL…EALV), 86-106 (GYVV…EGFW), 130-150 (FPVL…TFSL), 160-180 (IVGF…VVMA), 236-256 (ALFG…MAGT), 275-295 (VGML…AAMS), 304-324 (MSSD…PAFF), 332-352 (TPTI…WMSF), 355-375 (IIEF…AAFV), 395-415 (FGVS…MVLA), and 420-440 (FLIS…LTLV). The tract at residues 454-479 (RPVSGVSSESQLDEEHGDESAASLLP) is disordered.

The protein belongs to the amino acid-polyamine-organocation (APC) superfamily. Polyamine:cation symporter (PHS) (TC 2.A.3.12) family.

The protein localises to the cell membrane. Its function is as follows. Probable cell membrane polyamine/proton symporter involved in the polyamine uptake in cells. The polypeptide is Probable polyamine transporter At3g19553 (Arabidopsis thaliana (Mouse-ear cress)).